We begin with the raw amino-acid sequence, 101 residues long: Ribonuclease P protein component 1 (101 aa).

Belongs to the eukaryotic/archaeal RNase P protein component 1 family. In terms of assembly, consists of a catalytic RNA component and at least 4-5 protein subunits.

Its subcellular location is the cytoplasm. It catalyses the reaction Endonucleolytic cleavage of RNA, removing 5'-extranucleotides from tRNA precursor.. Part of ribonuclease P, a protein complex that generates mature tRNA molecules by cleaving their 5'-ends. The chain is Ribonuclease P protein component 1 from Methanococcoides burtonii (strain DSM 6242 / NBRC 107633 / OCM 468 / ACE-M).